The sequence spans 371 residues: Deoxyguanosinetriphosphate triphosphohydrolase-like protein (371 aa).

In terms of domain architecture, HD spans R62–N200.

It belongs to the dGTPase family. Type 2 subfamily.

This is Deoxyguanosinetriphosphate triphosphohydrolase-like protein from Pelagibacter ubique (strain HTCC1062).